Consider the following 229-residue polypeptide: Cytidylate kinase (229 aa).

Position 10–18 (10–18 (GFSSCGKST)) interacts with ATP.

It belongs to the cytidylate kinase family. Type 1 subfamily.

The protein resides in the cytoplasm. It catalyses the reaction CMP + ATP = CDP + ADP. The enzyme catalyses dCMP + ATP = dCDP + ADP. This chain is Cytidylate kinase, found in Bacteroides fragilis (strain ATCC 25285 / DSM 2151 / CCUG 4856 / JCM 11019 / LMG 10263 / NCTC 9343 / Onslow / VPI 2553 / EN-2).